We begin with the raw amino-acid sequence, 211 residues long: Large ribosomal subunit protein bL25 (211 aa).

This sequence belongs to the bacterial ribosomal protein bL25 family. CTC subfamily. In terms of assembly, part of the 50S ribosomal subunit; part of the 5S rRNA/L5/L18/L25 subcomplex. Contacts the 5S rRNA. Binds to the 5S rRNA independently of L5 and L18.

In terms of biological role, this is one of the proteins that binds to the 5S RNA in the ribosome where it forms part of the central protuberance. The sequence is that of Large ribosomal subunit protein bL25 from Methylobacterium nodulans (strain LMG 21967 / CNCM I-2342 / ORS 2060).